Here is a 572-residue protein sequence, read N- to C-terminus: 2-hydroxyacyl-CoA lyase (572 aa).

Position 2 is an N-acetylalanine (alanine 2). Glutamate 58 lines the thiamine diphosphate pocket. Positions 407–488 (TMDVGRSVLV…IIVFNNGGVY (82 aa)) are thiamine pyrophosphate binding. Residues aspartate 457 and asparagine 484 each contribute to the Mg(2+) site.

The protein belongs to the TPP enzyme family. In terms of assembly, homotetramer. It depends on Mg(2+) as a cofactor. Thiamine diphosphate is required as a cofactor.

The enzyme catalyses an (R)-2-hydroxy-long-chain-fatty acyl-CoA = a long-chain fatty aldehyde + formyl-CoA. It catalyses the reaction a 2-hydroxy-3-methyl fatty acyl-CoA = a 2-methyl-branched fatty aldehyde + formyl-CoA. Functionally, catalyzes a carbon-carbon cleavage reaction; cleaves a 2-hydroxy-3-methylacyl-CoA into formyl-CoA and a 2-methyl-branched fatty aldehyde. In Arabidopsis thaliana (Mouse-ear cress), this protein is 2-hydroxyacyl-CoA lyase (HACL).